The sequence spans 196 residues: Beta-crystallin A4 (196 aa).

Thr-2 carries the post-translational modification N-acetylthreonine. Residues 2–11 (TLQCTKSAGH) form an N-terminal arm region. Beta/gamma crystallin 'Greek key' domains follow at residues 12-51 (WRVV…KVLS) and 52-98 (GAWV…RPVA). The connecting peptide stretch occupies residues 99-104 (CANHRD). Beta/gamma crystallin 'Greek key' domains follow at residues 105 to 146 (SRLT…HVQS) and 147 to 195 (GAWV…RRIQ).

As to quaternary structure, homo/heterodimer, or complexes of higher-order. The structure of beta-crystallin oligomers seems to be stabilized through interactions between the N-terminal arms.

Functionally, crystallins are the dominant structural components of the vertebrate eye lens. The polypeptide is Beta-crystallin A4 (Cryba4) (Rattus norvegicus (Rat)).